A 409-amino-acid polypeptide reads, in one-letter code: MIDTLFFLFFLFFDSPLRRLLLLCAVLALRAPTAHSPILRSSIVTPTARAVSEVSGCTTIDPDFLVEISDSNQTRAMSKARVYTEVNVIRPKDYWDYESLIVQWGEQDDYEVVRKVGRGKYSEVFEGINVNSKEKCIIKILKPVKKKKIRREIKILQNLCGGPNIVKLLDVVRDQHSKTPSLIFEYVNSTDFKVLYPTLTDYDIRYYIYELLKALDFCHSQGIMHRDVKPHNVMIDHELRKLRLIDWGLAEFYHPGKEYNVRVASRYFKGPELLVDLQDYDYSLDMWSLGCMFAGMIFRKEPFFYGHDNQDQLVKIAKVLGTDELNAYLNKYQLELDPQLEALVGRHSRKPWSKFINADNQHLVSPEAIDFLDKLLRYDHQDRLTAKEAMAHAYFAQVRAAETSRMRSQ.

An N-terminal signal peptide occupies residues 1-35 (MIDTLFFLFFLFFDSPLRRLLLLCAVLALRAPTAH). N-linked (GlcNAc...) asparagine glycosylation occurs at Asn-72. The 286-residue stretch at 110–395 (YEVVRKVGRG…AKEAMAHAYF (286 aa)) folds into the Protein kinase domain. Residues 116–124 (VGRGKYSEV) and Lys-139 each bind ATP. The N-linked (GlcNAc...) asparagine glycan is linked to Asn-188. Asp-227 acts as the Proton acceptor in catalysis.

The protein belongs to the protein kinase superfamily. Ser/Thr protein kinase family. CK2 subfamily. Heterotetramer of two catalytic alpha subunits and two regulatory beta subunits. In terms of tissue distribution, seems to be present in all plant organs. But seems to be less expressed than CKA2.

The protein localises to the nucleus. Its subcellular location is the nucleolus. The catalysed reaction is L-seryl-[protein] + ATP = O-phospho-L-seryl-[protein] + ADP + H(+). It catalyses the reaction L-threonyl-[protein] + ATP = O-phospho-L-threonyl-[protein] + ADP + H(+). Its activity is regulated as follows. Inhibited by heparin. Its function is as follows. Casein kinases are operationally defined by their preferential utilization of acidic proteins such as caseins as substrates. Phosphorylates casein in vitro. The alpha chain contains the catalytic site. The tetrameric holoenzyme CK2, composed of two alpha and two beta subunits, phosphorylates the transcription factor GBFl, resulting in stimulation of its DNA binding activity. CK2 phosphorylates the transcription factor PIF1 after an exposure to light, resulting in a proteasome-dependent degradation of PIF1 and promotion of photomorphogenesis. CK2 phosphorylates translation initiation factors. May participate in the regulation of the initiation of translation. Acts as a circadian clock component that maintains the correct period length through phosphorylation of CCA1. Required for the maintenance and control of genomic stability and chromatin structure. May act as an ectokinase that phosphorylates several extracellular proteins. The sequence is that of Casein kinase II subunit alpha-1 from Arabidopsis thaliana (Mouse-ear cress).